A 95-amino-acid polypeptide reads, in one-letter code: MKTFKEFTSTTTPVSTITEATLTSEVIKANKGREGKPMISLVDGEEIKGTVYLGDGWSAKKDGATIVISPAEETALFKAKHISAAHLKIIAKNLL.

Positions 1–19 are excised as a propeptide; it reads MKTFKEFTSTTTPVSTITE.

Functionally, internal protein I is one of four proteins in a complex that functions in bacteriophage head maturation. The sequence is that of Internal protein I (ipi1) from Escherichia coli (Bacteriophage T4).